Reading from the N-terminus, the 253-residue chain is 1-(5-phosphoribosyl)-5-[(5-phosphoribosylamino)methylideneamino] imidazole-4-carboxamide isomerase (253 aa).

Asp8 serves as the catalytic Proton acceptor. The active-site Proton donor is the Asp129.

Belongs to the HisA/HisF family.

It is found in the cytoplasm. The catalysed reaction is 1-(5-phospho-beta-D-ribosyl)-5-[(5-phospho-beta-D-ribosylamino)methylideneamino]imidazole-4-carboxamide = 5-[(5-phospho-1-deoxy-D-ribulos-1-ylimino)methylamino]-1-(5-phospho-beta-D-ribosyl)imidazole-4-carboxamide. Its pathway is amino-acid biosynthesis; L-histidine biosynthesis; L-histidine from 5-phospho-alpha-D-ribose 1-diphosphate: step 4/9. In Microcystis aeruginosa (strain NIES-843 / IAM M-2473), this protein is 1-(5-phosphoribosyl)-5-[(5-phosphoribosylamino)methylideneamino] imidazole-4-carboxamide isomerase.